The chain runs to 133 residues: Homeobox protein BarH-like 2 (133 aa).

Positions 1 to 46 form a DNA-binding region, homeobox; the sequence is ELEKEFQKQKYLSTPDRLDLAQSLGLTQLQVKTWYQNRRMKWKKMV. Residues 45–133 are disordered; it reads MVLKGGQEAP…VTSPEPPPSS (89 aa).

The protein belongs to the BAR homeobox family. Expressed in keratinizing epithelia such as wool follicle, tongue and esophagus. Expressed at low level in thymus. Not detected in spleen, skeletal muscle, brain, heart kidney, liver and lung.

It localises to the nucleus. Its function is as follows. Transcription factor. Binds optimally to the DNA consensus sequence 5'-YYTAATGRTTTTY-3'. May control the expression of neural adhesion molecules such as L1 or Ng-CAM during embryonic development of both the central and peripherical nervous system. May be involved in controlling adhesive processes in keratinizing epithelia. This chain is Homeobox protein BarH-like 2 (BARX2), found in Ovis aries (Sheep).